Here is a 286-residue protein sequence, read N- to C-terminus: Ribosome-inactivating protein momordin I (286 aa).

Positions 1-23 (MSRFSVLSFLILAIFLGGSIVKG) are cleaved as a signal peptide. The active site involves glutamate 183. N-linked (GlcNAc...) asparagine glycosylation is present at asparagine 250. The propeptide at 270–286 (AEGDNGDVSTTHGFSSY) is removed in mature form.

The protein belongs to the ribosome-inactivating protein family. Type 1 RIP subfamily.

It catalyses the reaction Endohydrolysis of the N-glycosidic bond at one specific adenosine on the 28S rRNA.. The protein is Ribosome-inactivating protein momordin I of Momordica charantia (Bitter gourd).